Consider the following 205-residue polypeptide: Thymidine kinase (205 aa).

ATP contacts are provided by residues 9–16 (SAMNAGKS) and 87–90 (DECQ). The Proton acceptor role is filled by E88. The Zn(2+) site is built by C145, C147, C182, and H185.

It belongs to the thymidine kinase family. In terms of assembly, homotetramer.

The protein resides in the cytoplasm. The catalysed reaction is thymidine + ATP = dTMP + ADP + H(+). This chain is Thymidine kinase, found in Shigella dysenteriae serotype 1 (strain Sd197).